Consider the following 637-residue polypeptide: 1-deoxy-D-xylulose-5-phosphate synthase (637 aa).

Residues H76 and 117 to 119 (GHS) contribute to the thiamine diphosphate site. Residue D148 participates in Mg(2+) binding. Residues 149–150 (GA), N177, Y294, and E381 contribute to the thiamine diphosphate site. N177 contributes to the Mg(2+) binding site.

This sequence belongs to the transketolase family. DXPS subfamily. Homodimer. Mg(2+) serves as cofactor. Thiamine diphosphate is required as a cofactor.

The catalysed reaction is D-glyceraldehyde 3-phosphate + pyruvate + H(+) = 1-deoxy-D-xylulose 5-phosphate + CO2. It functions in the pathway metabolic intermediate biosynthesis; 1-deoxy-D-xylulose 5-phosphate biosynthesis; 1-deoxy-D-xylulose 5-phosphate from D-glyceraldehyde 3-phosphate and pyruvate: step 1/1. In terms of biological role, catalyzes the acyloin condensation reaction between C atoms 2 and 3 of pyruvate and glyceraldehyde 3-phosphate to yield 1-deoxy-D-xylulose-5-phosphate (DXP). The protein is 1-deoxy-D-xylulose-5-phosphate synthase of Neisseria meningitidis serogroup C / serotype 2a (strain ATCC 700532 / DSM 15464 / FAM18).